Here is a 132-residue protein sequence, read N- to C-terminus: MVMTDPIADMLTRIRNANLARHETVEIPSSKMKKAIAMILLKEGFVKAVEEIDDGKGGILKITLKYGPNKERVISGLKRISKPGLRVYAKHDELPRVLGGLGIAIISTSKGIMTDKEARKAGLGGEVICYVW.

Belongs to the universal ribosomal protein uS8 family. In terms of assembly, part of the 30S ribosomal subunit. Contacts proteins S5 and S12.

Functionally, one of the primary rRNA binding proteins, it binds directly to 16S rRNA central domain where it helps coordinate assembly of the platform of the 30S subunit. The chain is Small ribosomal subunit protein uS8 (rpsH) from Caldanaerobacter subterraneus subsp. tengcongensis (strain DSM 15242 / JCM 11007 / NBRC 100824 / MB4) (Thermoanaerobacter tengcongensis).